A 2531-amino-acid chain; its full sequence is Talin (2531 aa).

One can recognise an FERM domain in the interval 87 to 401; it reads RPLRVRMMDE…GYIDIILKKK (315 aa). The tract at residues 598–621 is interaction with VIN1; it reads GEKLLEAARGLAGAVRHLLKSAEP. The I/LWEQ domain occupies 2287–2526; that stretch reads TDWVDPSDPN…KIRHDKYKRH (240 aa). The tract at residues 2466-2485 is disordered; it reads AAKRSSEEGDDEEVSGGGQE.

As to quaternary structure, interacts with VIN1 (vinculin); the interaction facilitates VIN1 binding to F-actin.

Its subcellular location is the cytoplasm. It is found in the cytoskeleton. It localises to the cell cortex. Probably involved in connections of major cytoskeletal structures to the plasma membrane. The chain is Talin from Oscarella pearsei (Sponge).